Consider the following 578-residue polypeptide: MDNLRECINRKRRLLALPDVPETSDAFLSDLRHLYMCVAFCDQHKTTGDESRFTNLELLDQDEALGAQRAFEAKHGIKGGSLGDVLDHELKKVIEFTFTSGSLYIAEQRKRKTQADSIIVCVSEGLNDFSVSHGVLDMGLVETGVNAVRDFCTQNGIPMKINQVGSTRTPTPISTCKISEQITRQINSTITERKMETVLAAIAIKPELKXTQKGCXXCKELEDENILWMDPQFCEIDESFPYRGGPYGNFLQELLLTTNDVETNGKDREEVVKXILDNKAFTVESGECIITLPDKMTCFGEQEKKRPATIDEVRTAGERFEQSVKPKTQRYGRLSDKWMELEKFIFTASKTEVDTFLSVGTERLESVGVCVGALHRATTTRIIRPMIQGGKCWGMMFKTKSKMGDTRKEGYCHAIIFGKGEDKSGQNKMTMMGKTVHWHLRVVKSKGDWMAQQLCANKSRIWQHDPELVTEGVTVLMTPFSQKIATISRWRAMRLDSMFHVSSAWHHSPACEAASAMLRKFVEIVHAINQKRDWGVVGSMEDMVKEVEEIGEHLQTACDFRVYNXCKALIQKIAVSTQ.

The RNA polymerase is composed of three subunits: PB1, PB2 and PA. Post-translationally, phosphorylated on serines and threonines by host kinases.

Implicated in endonuclease cleavage of capped RNA primers. Displays an elongation factor activity in viral RNA synthesis. Dispensable for viral transcription, but not replication. In Infectious salmon anemia virus (isolate Atlantic salmon/Norway/810/9/99) (ISAV), this protein is Polymerase acidic protein.